A 466-amino-acid polypeptide reads, in one-letter code: Chromosomal replication initiator protein DnaA (466 aa).

The tract at residues 1–86 (MSLSLWQQCL…EVGTKPVTQT (86 aa)) is domain I, interacts with DnaA modulators. Positions 86 to 129 (TLKTPVHNVVAPAQTTTAQPQRVAPAARSGWDNVPAPAEPTYRS) are domain II. The domain III, AAA+ region stretch occupies residues 130–346 (NVNVKHTFDN…GALNRVIANA (217 aa)). The ATP site is built by Gly-174, Gly-176, Lys-177, and Thr-178. Positions 347–466 (NFTGRAITID…FSNLIRTLSS (120 aa)) are domain IV, binds dsDNA.

It belongs to the DnaA family. As to quaternary structure, oligomerizes as a right-handed, spiral filament on DNA at oriC.

The protein resides in the cytoplasm. In terms of biological role, plays an essential role in the initiation and regulation of chromosomal replication. ATP-DnaA binds to the origin of replication (oriC) to initiate formation of the DNA replication initiation complex once per cell cycle. Binds the DnaA box (a 9 base pair repeat at the origin) and separates the double-stranded (ds)DNA. Forms a right-handed helical filament on oriC DNA; dsDNA binds to the exterior of the filament while single-stranded (ss)DNA is stabiized in the filament's interior. The ATP-DnaA-oriC complex binds and stabilizes one strand of the AT-rich DNA unwinding element (DUE), permitting loading of DNA polymerase. After initiation quickly degrades to an ADP-DnaA complex that is not apt for DNA replication. Binds acidic phospholipids. The sequence is that of Chromosomal replication initiator protein DnaA from Salmonella agona (strain SL483).